A 127-amino-acid polypeptide reads, in one-letter code: Large ribosomal subunit protein bL12 (127 aa).

The protein belongs to the bacterial ribosomal protein bL12 family. In terms of assembly, homodimer. Part of the ribosomal stalk of the 50S ribosomal subunit. Forms a multimeric L10(L12)X complex, where L10 forms an elongated spine to which 2 to 4 L12 dimers bind in a sequential fashion. Binds GTP-bound translation factors.

In terms of biological role, forms part of the ribosomal stalk which helps the ribosome interact with GTP-bound translation factors. Is thus essential for accurate translation. This chain is Large ribosomal subunit protein bL12, found in Streptomyces virginiae (Streptomyces cinnamonensis).